A 413-amino-acid polypeptide reads, in one-letter code: Enolase (413 aa).

Q170 contacts (2R)-2-phosphoglycerate. E212 functions as the Proton donor in the catalytic mechanism. D245, E286, and D313 together coordinate Mg(2+). (2R)-2-phosphoglycerate contacts are provided by K338, R367, S368, and K389. The active-site Proton acceptor is the K338.

The protein belongs to the enolase family. The cofactor is Mg(2+).

The protein localises to the cytoplasm. Its subcellular location is the secreted. The protein resides in the cell surface. It carries out the reaction (2R)-2-phosphoglycerate = phosphoenolpyruvate + H2O. Its pathway is carbohydrate degradation; glycolysis; pyruvate from D-glyceraldehyde 3-phosphate: step 4/5. Its function is as follows. Catalyzes the reversible conversion of 2-phosphoglycerate (2-PG) into phosphoenolpyruvate (PEP). It is essential for the degradation of carbohydrates via glycolysis. This chain is Enolase, found in Neorickettsia sennetsu (strain ATCC VR-367 / Miyayama) (Ehrlichia sennetsu).